The sequence spans 253 residues: Methionine aminopeptidase (253 aa).

Position 78 (His-78) interacts with substrate. Asp-95, Asp-106, and His-169 together coordinate a divalent metal cation. Residue His-176 participates in substrate binding. A divalent metal cation-binding residues include Glu-206 and Glu-237.

Belongs to the peptidase M24A family. Methionine aminopeptidase type 1 subfamily. In terms of assembly, monomer. Co(2+) serves as cofactor. Requires Zn(2+) as cofactor. The cofactor is Mn(2+). Fe(2+) is required as a cofactor.

It carries out the reaction Release of N-terminal amino acids, preferentially methionine, from peptides and arylamides.. Removes the N-terminal methionine from nascent proteins. The N-terminal methionine is often cleaved when the second residue in the primary sequence is small and uncharged (Met-Ala-, Cys, Gly, Pro, Ser, Thr, or Val). Requires deformylation of the N(alpha)-formylated initiator methionine before it can be hydrolyzed. The chain is Methionine aminopeptidase from Helicobacter pylori (strain ATCC 700392 / 26695) (Campylobacter pylori).